We begin with the raw amino-acid sequence, 141 residues long: Hemoglobin subunit alpha (141 aa).

Residues 1–141 enclose the Globin domain; it reads VLSPADKTNV…VSTVLTSKYR (141 aa). A Phosphoserine modification is found at Ser3. Residue Lys7 is modified to N6-succinyllysine. Thr8 is subject to Phosphothreonine. Residue Lys11 is modified to N6-succinyllysine. Residue Lys16 is modified to N6-acetyllysine; alternate. At Lys16 the chain carries N6-succinyllysine; alternate. Phosphotyrosine is present on Tyr24. At Ser35 the chain carries Phosphoserine. Position 40 is an N6-succinyllysine (Lys40). The residue at position 49 (Ser49) is a Phosphoserine. His58 contributes to the O2 binding site. His87 is a heme b binding site. A Phosphoserine modification is found at Ser102. Residue Thr108 is modified to Phosphothreonine. 2 positions are modified to phosphoserine: Ser124 and Ser131. Phosphothreonine is present on residues Thr134 and Thr137. Phosphoserine is present on Ser138.

It belongs to the globin family. In terms of assembly, heterotetramer of two alpha chains and two beta chains. As to expression, red blood cells.

In terms of biological role, involved in oxygen transport from the lung to the various peripheral tissues. The polypeptide is Hemoglobin subunit alpha (Otospermophilus beecheyi (California ground squirrel)).